Consider the following 213-residue polypeptide: Kynurenine formamidase (213 aa).

Tryptophan 18 provides a ligand contact to substrate. Residues histidine 48, histidine 52, and aspartate 54 each contribute to the Zn(2+) site. Histidine 58 serves as the catalytic Proton donor/acceptor. Zn(2+)-binding residues include histidine 160 and glutamate 172.

The protein belongs to the Cyclase 1 superfamily. KynB family. Homodimer. Zn(2+) serves as cofactor.

It carries out the reaction N-formyl-L-kynurenine + H2O = L-kynurenine + formate + H(+). It functions in the pathway amino-acid degradation; L-tryptophan degradation via kynurenine pathway; L-kynurenine from L-tryptophan: step 2/2. Its function is as follows. Catalyzes the hydrolysis of N-formyl-L-kynurenine to L-kynurenine, the second step in the kynurenine pathway of tryptophan degradation. This chain is Kynurenine formamidase, found in Burkholderia pseudomallei (strain 1106a).